Here is a 237-residue protein sequence, read N- to C-terminus: Phosphoribosylaminoimidazole-succinocarboxamide synthase (237 aa).

The protein belongs to the SAICAR synthetase family.

It catalyses the reaction 5-amino-1-(5-phospho-D-ribosyl)imidazole-4-carboxylate + L-aspartate + ATP = (2S)-2-[5-amino-1-(5-phospho-beta-D-ribosyl)imidazole-4-carboxamido]succinate + ADP + phosphate + 2 H(+). The protein operates within purine metabolism; IMP biosynthesis via de novo pathway; 5-amino-1-(5-phospho-D-ribosyl)imidazole-4-carboxamide from 5-amino-1-(5-phospho-D-ribosyl)imidazole-4-carboxylate: step 1/2. This Pectobacterium atrosepticum (strain SCRI 1043 / ATCC BAA-672) (Erwinia carotovora subsp. atroseptica) protein is Phosphoribosylaminoimidazole-succinocarboxamide synthase.